Consider the following 263-residue polypeptide: Tryptophan synthase alpha chain (263 aa).

Residues glutamate 49 and aspartate 60 each act as proton acceptor in the active site.

The protein belongs to the TrpA family. In terms of assembly, tetramer of two alpha and two beta chains.

The enzyme catalyses (1S,2R)-1-C-(indol-3-yl)glycerol 3-phosphate + L-serine = D-glyceraldehyde 3-phosphate + L-tryptophan + H2O. It participates in amino-acid biosynthesis; L-tryptophan biosynthesis; L-tryptophan from chorismate: step 5/5. Functionally, the alpha subunit is responsible for the aldol cleavage of indoleglycerol phosphate to indole and glyceraldehyde 3-phosphate. The sequence is that of Tryptophan synthase alpha chain from Cereibacter sphaeroides (strain KD131 / KCTC 12085) (Rhodobacter sphaeroides).